A 441-amino-acid polypeptide reads, in one-letter code: Enolase (441 aa).

Residue glutamine 164 coordinates (2R)-2-phosphoglycerate. Residue glutamate 206 is the Proton donor of the active site. Residues aspartate 243, glutamate 289, and aspartate 316 each coordinate Mg(2+). 4 residues coordinate (2R)-2-phosphoglycerate: lysine 341, arginine 370, serine 371, and lysine 392. Lysine 341 functions as the Proton acceptor in the catalytic mechanism.

The protein belongs to the enolase family. The cofactor is Mg(2+).

It localises to the cytoplasm. It is found in the secreted. The protein resides in the cell surface. It carries out the reaction (2R)-2-phosphoglycerate = phosphoenolpyruvate + H2O. Its pathway is carbohydrate degradation; glycolysis; pyruvate from D-glyceraldehyde 3-phosphate: step 4/5. Its function is as follows. Catalyzes the reversible conversion of 2-phosphoglycerate (2-PG) into phosphoenolpyruvate (PEP). It is essential for the degradation of carbohydrates via glycolysis. The polypeptide is Enolase (Leuconostoc mesenteroides subsp. mesenteroides (strain ATCC 8293 / DSM 20343 / BCRC 11652 / CCM 1803 / JCM 6124 / NCDO 523 / NBRC 100496 / NCIMB 8023 / NCTC 12954 / NRRL B-1118 / 37Y)).